The chain runs to 173 residues: ATP synthase subunit b (173 aa).

The chain crosses the membrane as a helical span at residues 15-35 (GVEWGTVIVQVLTFIVLLALL).

The protein belongs to the ATPase B chain family. In terms of assembly, F-type ATPases have 2 components, F(1) - the catalytic core - and F(0) - the membrane proton channel. F(1) has five subunits: alpha(3), beta(3), gamma(1), delta(1), epsilon(1). F(0) has three main subunits: a(1), b(2) and c(10-14). The alpha and beta chains form an alternating ring which encloses part of the gamma chain. F(1) is attached to F(0) by a central stalk formed by the gamma and epsilon chains, while a peripheral stalk is formed by the delta and b chains.

Its subcellular location is the cell membrane. In terms of biological role, f(1)F(0) ATP synthase produces ATP from ADP in the presence of a proton or sodium gradient. F-type ATPases consist of two structural domains, F(1) containing the extramembraneous catalytic core and F(0) containing the membrane proton channel, linked together by a central stalk and a peripheral stalk. During catalysis, ATP synthesis in the catalytic domain of F(1) is coupled via a rotary mechanism of the central stalk subunits to proton translocation. Its function is as follows. Component of the F(0) channel, it forms part of the peripheral stalk, linking F(1) to F(0). The polypeptide is ATP synthase subunit b (Staphylococcus aureus (strain MSSA476)).